Reading from the N-terminus, the 99-residue chain is Aspartyl/glutamyl-tRNA(Asn/Gln) amidotransferase subunit C (99 aa).

Belongs to the GatC family. Heterotrimer of A, B and C subunits.

The catalysed reaction is L-glutamyl-tRNA(Gln) + L-glutamine + ATP + H2O = L-glutaminyl-tRNA(Gln) + L-glutamate + ADP + phosphate + H(+). It carries out the reaction L-aspartyl-tRNA(Asn) + L-glutamine + ATP + H2O = L-asparaginyl-tRNA(Asn) + L-glutamate + ADP + phosphate + 2 H(+). In terms of biological role, allows the formation of correctly charged Asn-tRNA(Asn) or Gln-tRNA(Gln) through the transamidation of misacylated Asp-tRNA(Asn) or Glu-tRNA(Gln) in organisms which lack either or both of asparaginyl-tRNA or glutaminyl-tRNA synthetases. The reaction takes place in the presence of glutamine and ATP through an activated phospho-Asp-tRNA(Asn) or phospho-Glu-tRNA(Gln). This chain is Aspartyl/glutamyl-tRNA(Asn/Gln) amidotransferase subunit C, found in Polaromonas sp. (strain JS666 / ATCC BAA-500).